The primary structure comprises 158 residues: Protein OPG060 (158 aa).

It belongs to the orthopoxvirus OPG058 family.

This chain is Protein OPG060 (OPG060), found in Homo sapiens (Human).